Reading from the N-terminus, the 137-residue chain is Structural protein A137R (137 aa).

The protein belongs to the asfivirus A137R family. As to quaternary structure, interacts with host TBK1.

Its subcellular location is the virion. It is found in the host cytoplasm. Functionally, plays a role in the inhibition of the host innate immune response. Mechanistically, promotes the autophagy-mediated lysosomal degradation of host TBK1 and affects IRF3 nuclear translocation to block type I IFN production. The polypeptide is Structural protein A137R (Ornithodoros (relapsing fever ticks)).